The following is a 3391-amino-acid chain: MNNQRKKAKNTPFNMLKRERNRVSTVQQLTKRFSLGMLQGRGPLKLFMALVAFLRFLTIPPTAGILKRWGTIKKSKAINVLRGFRKEIGRMLNILNRRRRSAGMIIMLIPTVMAFHLTTRNGEPHMIVSRQEKGKSLLFKTEDGVNMCTLMAMDLGELCEDTITYKCPLLRQNEPEDIDCWCNSTSTWVTYGTCTTTGEHRREKRSVALVPHVGMGLETRTETWMSSEGAWKHAQRIETWILRHPGFTIMAAILAYTIGTTHFQRALIFILLTAVAPSMTMRCIGISNRDFVEGVSGGSWVDIVLEHGSCVTTMAKNKPTLDFELIKTEAKQPATLRKYCIEAKLTNTTTESRCPTQGEPSLNEEQDKRFVCKHSMVDRGWGNGCGLFGKGGIVTCAMFTCKKNMEGKIVQPENLEYTIVVTPHSGEEHAVGNDTGKHGKEIKVTPQSSITEAELTGYGTVTMECSPRTGLDFNEMVLLQMENKAWLVHRQWFLDLPLPWLPGADTQGSNWIQKETLVTFKNPHAKKQDVVVLGSQEGAMHTALTGATEIQMSSGNLLFTGHLKCRLRMDKLQLKGMSYSMCTGKFKVVKEIAETQHGTIVIRVQYEGDGSPCKIPFEIMDLEKRHVLGRLITVNPIVTEKDSPVNIEAEPPFGDSYIIIGVEPGQLKLNWFKKGSSIGQMFETTMRGAKRMAILGDTAWDFGSLGGVFTSIGKALHQVFGAIYGAAFSGVSWTMKILIGVIITWIGMNSRSTSLSVSLVLVGIVTLYLGVMVQADSGCVVSWKNKELKCGSGIFITDNVHTWTEQYKFQPESPSKLASAIQKAQEEGICGIRSVTRLENLMWKQITPELNHILAENEVKLTIMTGDIKGIMQAGKRSLRPQPTELKYSWKTWGKAKMLSTESHNQTFLIDGPETAECPNTNRAWNSLEVEDYGFGVFTTNIWLKLKEKQDAFCDSKLMSAAIKDNRAVHADMGYWIESALNDTWKIEKASFIEVKNCHWPKSHTLWSNGVLESEMIIPKNLAGPVSQHNYRPGYHTQIAGPWHLGKLEMDFDFCDGTTVVVTEDCGNRGPSLRTTTASGKLITEWCCRSCTLPPLRYRGEDGCWYGMEIRPLKEKEENLVNSLVTAGHGQVDNFSLGVLGMALFLEEMLRTRVGTKHAILLVAVSFVTLITGNMSFKDLGRVVVMVGATMTDDIGMGVTYLALLAAFKVRPTFAAGLLLRKLTSKELMMTTIGIVLLSQSTIPETILELTDALALGMMVLKMVRNMEKYQLAVTIMAILCVPNAVILQNAWKVSCTILAVVSVSPLLLTSSQQKTDWIPLALTIKGLNPTAIFLTTLSRTSKKRSWPLNEAIMAVGMVSILASSLLKNDIPMTGPLVAGGLLTVCYVLTGRSADLELERAADVKWEDQAEISGSSPILSITISEDGSMSIKNEEEEQTLTILIRTGLLVISGLFPVSIPITAAAWYLWEVKKQRAGVLWDVPSPPPMGKAELEDGAYRIKQKGILGYSQIGAGVYKEGTFHTMWHVTRGAVLMHKGKRIEPSWADVKKDLISYGGGWKLEGEWKEGEEVQVLALEPGKNPRAVQTKPGLFKTNAGTIGAVSLDFSPGTSGSPIIDKKGKVVGLYGNGVVTRSGAYVSAIAQTEKSIEDNPEIEDDIFRKRRLTIMDLHPGAGKTKRYLPAIVREAIKRGLRTLILAPTRVVAAEMEEALRGLPIRYQTPAIRAEHTGREIVDLMCHATFTMRLLSPVRVPNYNLIIMDEAHFTDPASIAARGYISTRVEMGEAAGIFMTATPPGSRDPFPQSNAPIIDEEREIPERSWNSGHEWVTDFKGKTVWFVPSIKAGNDIAACLRKNGKKVIQLSRKTFDSEYVKTRTNDWDFVVTTDISEMGANFKAERVIDPRRCMKPVILTDGEERVILAGPMPVTHSSAAQRRGRIGRNPKNENDQYIYMGEPLENDEDCAHWKEAKMLLDNINTPEGIIPSMFEPEREKVDAIDGEYRLRGEARKTFVDLMRRGDLPVWLAYKVAAEGINYADRRWCFDGIKNNQILEENVEVEIWTKEGERKKLKPRWLDARIYSDPLALKEFKEFAAGRKSLTLNLITEMGRLPTFMTQKTRDALDNLAVLHTAEAGGRAYNHALSELPETLETLLLLTLLATVTGGIFLFLMSGRGIGKMTLGMCCIITASVLLWYAQIQPHWIAASIILEFFLIVLLIPEPEKQRTPQDNQLTYVVIAILTVVAATMANEMGFLEKTKKDLGLGSIATQQPESNILDIDLRPASAWTLYAVATTFVTPMLRHSIENSSVNVSLTAIANQATVLMGLGKGWPLSKMDIGVPLLAIGCYSQVNPITLTAALLLLVAHYAIIGPGLQAKATREAQKRAAAGIMKNPTVDGITVIDLDPIPYDPKFEKQLGQVMLLVLCVTQVLMMRTTWALCEALTLATGPISTLWEGNPGRFWNTTIAVSMANIFRGSYLAGAGLLFSIMKNTTNTRRGTGNIGETLGEKWKSRLNALGKSEFQIYKKSGIQEVDRTLAKEGIKRGETDHHAVSRGSAKLRWFVERNMVTPEGKVVDLGCGRGGWSYYCGGLKNVREVKGLTKGGPGHEEPIPMSTYGWNLVRLQSGVDVFFIPPEKCDTLLCDIGESSPSPTVEAGRTLRVLNLVENWLNNNTQFCIKVLNPYMPSVIEKMETLQRKYGGALVRNPLSRNSTHEMYWVSNASGNIVSSVNMISRMLINRFTMRHKKATYEPDVDLGSGTRNIGIESEIPNLDIIGKRIEKIKQEHETSWHYDQDHPYKTWAYHGSYETKQTGSASSMVNGVVRLLTKPWDVLPTVTQMAMTDTTPFGQQRVFKEKVDTRTQEPKEGTKKLMKITAEWLWKELGKKKTPRMCTREEFTRKVRSNAALGAIFTDENKWKSAREAVEDSRFWELVDKERNLHLEGKCETCVYNMMGKREKKLGEFGKAKGSRAIWYMWLGARFLEFEALGFLNEDHWFSRENSLSGVEGEGLHKLGYILRDVSKKEGGAMYADDTAGWDTRITLEDLKNEEMVTNHMEGEHKKLAEAIFKLTYQNKVVRVQRPTPRGTVMDIISRRDQRGSGQVGTYGLNTFTNMEAQLIRQMEGEGVFKNIQHLTVTEEIAVQNWLARVGRERLSRMAISGDDCVVKPLDDRFASALTALNDMGKIRKDIQQWEPSRGWNDWTQVPFCSHHFHELIMKDGRVLVVPCRNQDELIGRARISQGAGWSLRETACLGKSYAQMWSLMYFHRRDLRLAANAICSAVPSHWVPTSRTTWSIHAKHEWMTTEDMLTVWNRVWIQENPWMEDKTPVESWEEIPYLGKREDQWCGSLIGLTSRATWAKNIQAAINQVRSLIGNEEYTDYMPSMKRFRREEEEAGVLW.

The interaction with host EXOC1 stretch occupies residues 1-15; it reads MNNQRKKAKNTPFNM. At 1-101 the chain is on the cytoplasmic side; the sequence is MNNQRKKAKN…LNILNRRRRS (101 aa). The interval 37–72 is hydrophobic; homodimerization of capsid protein C; the sequence is MLQGRGPLKLFMALVAFLRFLTIPPTAGILKRWGTI. Positions 101-114 are cleaved as a propeptide — ER anchor for the capsid protein C, removed in mature form by serine protease NS3; the sequence is SAGMIIMLIPTVMA. A helical transmembrane segment spans residues 102–122; that stretch reads AGMIIMLIPTVMAFHLTTRNG. Over 123 to 238 the chain is Extracellular; the sequence is EPHMIVSRQE…GAWKHAQRIE (116 aa). N-linked (GlcNAc...) asparagine; by host glycosylation occurs at Asn183. The chain crosses the membrane as a helical span at residues 239-259; that stretch reads TWILRHPGFTIMAAILAYTIG. Residues 260–265 lie on the Cytoplasmic side of the membrane; the sequence is TTHFQR. A helical transmembrane segment spans residues 266-280; that stretch reads ALIFILLTAVAPSMT. At 281–725 the chain is on the extracellular side; it reads MRCIGISNRD…LHQVFGAIYG (445 aa). Disulfide bonds link Cys283/Cys310, Cys340/Cys401, Cys354/Cys385, and Cys372/Cys396. Asn347 carries N-linked (GlcNAc...) asparagine; by host glycosylation. The fusion peptide stretch occupies residues 378–391; that stretch reads DRGWGNGCGLFGKG. Asn433 is a glycosylation site (N-linked (GlcNAc...) asparagine; by host). 2 disulfides stabilise this stretch: Cys465–Cys565 and Cys582–Cys613. The helical transmembrane segment at 726 to 746 threads the bilayer; sequence AAFSGVSWTMKILIGVIITWI. At 747-752 the chain is on the cytoplasmic side; the sequence is GMNSRS. A helical transmembrane segment spans residues 753–773; the sequence is TSLSVSLVLVGIVTLYLGVMV. Over 774-1195 the chain is Extracellular; sequence QADSGCVVSW…MVGATMTDDI (422 aa). 6 cysteine pairs are disulfide-bonded: Cys779–Cys790, Cys830–Cys918, Cys954–Cys998, Cys1055–Cys1104, Cys1066–Cys1088, and Cys1087–Cys1091. 2 N-linked (GlcNAc...) asparagine; by host glycosylation sites follow: Asn905 and Asn982. Asn1134 carries N-linked (GlcNAc...) asparagine; by host glycosylation. A helical transmembrane segment spans residues 1196-1220; sequence GMGVTYLALLAAFKVRPTFAAGLLL. Residues 1221–1226 lie on the Cytoplasmic side of the membrane; sequence RKLTSK. The chain crosses the membrane as a helical span at residues 1227–1245; the sequence is ELMMTTIGIVLLSQSTIPE. Topologically, residues 1246 to 1269 are lumenal; sequence TILELTDALALGMMVLKMVRNMEK. Residues 1270-1290 traverse the membrane as a helical segment; sequence YQLAVTIMAILCVPNAVILQN. Position 1291 (Ala1291) is a topological domain, cytoplasmic. The helical transmembrane segment at 1292–1310 threads the bilayer; that stretch reads WKVSCTILAVVSVSPLLLT. Over 1311–1317 the chain is Lumenal; sequence SSQQKTD. Residues 1318 to 1338 traverse the membrane as a helical segment; that stretch reads WIPLALTIKGLNPTAIFLTTL. Residues 1339–1346 are Cytoplasmic-facing; it reads SRTSKKRS. A helical transmembrane segment spans residues 1347 to 1367; sequence WPLNEAIMAVGMVSILASSLL. The Lumenal segment spans residues 1368–1370; it reads KND. The chain crosses the membrane as a helical span at residues 1371–1391; that stretch reads IPMTGPLVAGGLLTVCYVLTG. Residues 1392–1447 lie on the Cytoplasmic side of the membrane; that stretch reads RSADLELERAADVKWEDQAEISGSSPILSITISEDGSMSIKNEEEEQTLTILIRTG. Residues 1398 to 1437 form an interacts with and activates NS3 protease region; that stretch reads LERAADVKWEDQAEISGSSPILSITISEDGSMSIKNEEEE. Residues 1448-1468 constitute an intramembrane region (helical); that stretch reads LLVISGLFPVSIPITAAAWYL. Residues 1469 to 2147 are Cytoplasmic-facing; that stretch reads WEVKKQRAGV…LSELPETLET (679 aa). Residues 1476–1653 enclose the Peptidase S7 domain; that stretch reads AGVLWDVPSP…EKSIEDNPEI (178 aa). Catalysis depends on charge relay system; for serine protease NS3 activity residues His1526, Asp1550, and Ser1610. Residues 1655 to 1811 form the Helicase ATP-binding domain; that stretch reads DDIFRKRRLT…QSNAPIIDEE (157 aa). Positions 1659 to 1662 are important for RNA-binding; it reads RKRR. 1668–1675 provides a ligand contact to ATP; the sequence is LHPGAGKT. Residues 1759-1762 carry the DEAH box motif; the sequence is DEAH. A Helicase C-terminal domain is found at 1821 to 1988; sequence SGHEWVTDFK…IIPSMFEPER (168 aa). Lys1863 bears the N6-acetyllysine; by host mark. A helical transmembrane segment spans residues 2148–2168; the sequence is LLLLTLLATVTGGIFLFLMSG. Over 2169-2170 the chain is Lumenal; sequence RG. Positions 2171-2191 form an intramembrane region, helical; sequence IGKMTLGMCCIITASVLLWYA. Residue Gln2192 is a topological domain, lumenal. A helical transmembrane segment spans residues 2193–2213; that stretch reads IQPHWIAASIILEFFLIVLLI. At 2214-2228 the chain is on the cytoplasmic side; sequence PEPEKQRTPQDNQLT. Residues 2229 to 2249 form a helical membrane-spanning segment; that stretch reads YVVIAILTVVAATMANEMGFL. At 2250-2274 the chain is on the lumenal side; it reads EKTKKDLGLGSIATQQPESNILDID. The segment at residues 2275–2295 is an intramembrane region (helical); the sequence is LRPASAWTLYAVATTFVTPML. The Lumenal segment spans residues 2296–2316; that stretch reads RHSIENSSVNVSLTAIANQAT. N-linked (GlcNAc...) asparagine; by host glycans are attached at residues Asn2301 and Asn2305. Residues 2317–2337 constitute an intramembrane region (helical); sequence VLMGLGKGWPLSKMDIGVPLL. Over 2338–2347 the chain is Lumenal; that stretch reads AIGCYSQVNP. The helical transmembrane segment at 2348–2368 threads the bilayer; it reads ITLTAALLLLVAHYAIIGPGL. At 2369–2413 the chain is on the cytoplasmic side; sequence QAKATREAQKRAAAGIMKNPTVDGITVIDLDPIPYDPKFEKQLGQ. A helical membrane pass occupies residues 2414–2434; that stretch reads VMLLVLCVTQVLMMRTTWALC. Residues 2435-2459 lie on the Lumenal side of the membrane; the sequence is EALTLATGPISTLWEGNPGRFWNTT. Residue Asn2457 is glycosylated (N-linked (GlcNAc...) asparagine; by host). A helical transmembrane segment spans residues 2460–2480; sequence IAVSMANIFRGSYLAGAGLLF. Residues 2481–3391 lie on the Cytoplasmic side of the membrane; sequence SIMKNTTNTR…REEEEAGVLW (911 aa). The mRNA cap 0-1 NS5-type MT domain maps to 2493–2755; that stretch reads TGNIGETLGE…DVDLGSGTRN (263 aa). Ser2547 contributes to the S-adenosyl-L-methionine binding site. The residue at position 2547 (Ser2547) is a Phosphoserine. The active-site For 2'-O-MTase activity is the Lys2552. The SUMO-interacting motif signature appears at 2568–2571; the sequence is VVDL. Residues Gly2577, Trp2578, Thr2595, Lys2596, Asp2622, and Val2623 each contribute to the S-adenosyl-L-methionine site. Asp2637 functions as the For 2'-O-MTase activity in the catalytic mechanism. Ile2638 is a binding site for S-adenosyl-L-methionine. Active-site for 2'-O-MTase activity residues include Lys2672 and Glu2708. Tyr2710 provides a ligand contact to S-adenosyl-L-methionine. Residues Glu2929, His2933, Cys2938, and Cys2941 each coordinate Zn(2+). In terms of domain architecture, RdRp catalytic spans 3020–3169; that stretch reads AMYADDTAGW…PLDDRFASAL (150 aa). Zn(2+)-binding residues include His3203, Cys3219, and Cys3338.

This sequence in the N-terminal section; belongs to the class I-like SAM-binding methyltransferase superfamily. mRNA cap 0-1 NS5-type methyltransferase family. In terms of assembly, homodimer. Interacts (via N-terminus) with host EXOC1 (via C-terminus); this interaction results in EXOC1 degradation through the proteasome degradation pathway. Forms heterodimers with envelope protein E in the endoplasmic reticulum and Golgi. As to quaternary structure, homodimer; in the endoplasmic reticulum and Golgi. Interacts with protein prM. Interacts with non-structural protein 1. In terms of assembly, homodimer; Homohexamer when secreted. Interacts with envelope protein E. Interacts with host PRKAA1. Interacts (via N-terminus) with serine protease NS3. As to quaternary structure, forms a heterodimer with serine protease NS3. May form homooligomers. In terms of assembly, forms a heterodimer with NS2B. Interacts with NS4B. Interacts with unphosphorylated RNA-directed RNA polymerase NS5; this interaction stimulates RNA-directed RNA polymerase NS5 guanylyltransferase activity. Interacts with host SHFL. Interacts with host MAVS; this interaction inhibits the synthesis of IFN-beta. Interacts with host SHFL. Interacts with host AUP1; the interaction occurs in the presence of Dengue virus NS4B and induces lipophagy which facilitates production of virus progeny particles. May interact with host SRPRA and SEC61G. As to quaternary structure, interacts with serine protease NS3. In terms of assembly, homodimer. Interacts with host STAT2; this interaction inhibits the phosphorylation of the latter, and, when all viral proteins are present (polyprotein), targets STAT2 for degradation. Interacts with serine protease NS3. Interacts with host PAF1 complex; the interaction may prevent the recruitment of the PAF1 complex to interferon-responsive genes, and thus reduces the immune response. Post-translationally, specific enzymatic cleavages in vivo yield mature proteins. Cleavages in the lumen of endoplasmic reticulum are performed by host signal peptidase, whereas cleavages in the cytoplasmic side are performed by serine protease NS3. Signal cleavage at the 2K-4B site requires a prior NS3 protease-mediated cleavage at the 4A-2K site. In terms of processing, cleaved in post-Golgi vesicles by a host furin, releasing the mature small envelope protein M, and peptide pr. This cleavage is incomplete as up to 30% of viral particles still carry uncleaved prM. N-glycosylated. Post-translationally, N-glycosylated. The excreted form is glycosylated and this is required for efficient secretion of the protein from infected cells. In terms of processing, acetylated by host KAT5. Acetylation modulates NS3 RNA-binding and unwinding activities and plays an important positive role for viral replication. Phosphorylated on serines residues. This phosphorylation may trigger NS5 nuclear localization. Post-translationally, sumoylation of RNA-directed RNA polymerase NS5 increases NS5 protein stability allowing proper viral RNA replication.

It localises to the virion. The protein localises to the host nucleus. It is found in the host cytoplasm. Its subcellular location is the host perinuclear region. The protein resides in the secreted. It localises to the virion membrane. The protein localises to the host endoplasmic reticulum membrane. It is found in the host mitochondrion. It carries out the reaction Selective hydrolysis of -Xaa-Xaa-|-Yaa- bonds in which each of the Xaa can be either Arg or Lys and Yaa can be either Ser or Ala.. It catalyses the reaction RNA(n) + a ribonucleoside 5'-triphosphate = RNA(n+1) + diphosphate. The enzyme catalyses a ribonucleoside 5'-triphosphate + H2O = a ribonucleoside 5'-diphosphate + phosphate + H(+). The catalysed reaction is ATP + H2O = ADP + phosphate + H(+). It carries out the reaction a 5'-end (5'-triphosphoguanosine)-ribonucleoside in mRNA + S-adenosyl-L-methionine = a 5'-end (N(7)-methyl 5'-triphosphoguanosine)-ribonucleoside in mRNA + S-adenosyl-L-homocysteine. It catalyses the reaction a 5'-end (N(7)-methyl 5'-triphosphoguanosine)-ribonucleoside in mRNA + S-adenosyl-L-methionine = a 5'-end (N(7)-methyl 5'-triphosphoguanosine)-(2'-O-methyl-ribonucleoside) in mRNA + S-adenosyl-L-homocysteine + H(+). Its function is as follows. Plays a role in virus budding by binding to the cell membrane and gathering the viral RNA into a nucleocapsid that forms the core of a mature virus particle. During virus entry, may induce genome penetration into the host cytoplasm after hemifusion induced by the surface proteins. Can migrate to the cell nucleus where it modulates host functions. Overcomes the anti-viral effects of host EXOC1 by sequestering and degrading the latter through the proteasome degradation pathway. Inhibits RNA silencing by interfering with host Dicer. In terms of biological role, prevents premature fusion activity of envelope proteins in trans-Golgi by binding to envelope protein E at pH6.0. After virion release in extracellular space, gets dissociated from E dimers. Functionally, acts as a chaperone for envelope protein E during intracellular virion assembly by masking and inactivating envelope protein E fusion peptide. prM is the only viral peptide matured by host furin in the trans-Golgi network probably to avoid catastrophic activation of the viral fusion activity in acidic Golgi compartment prior to virion release. prM-E cleavage is inefficient, and many virions are only partially matured. These uncleaved prM would play a role in immune evasion. Its function is as follows. May play a role in virus budding. Exerts cytotoxic effects by activating a mitochondrial apoptotic pathway through M ectodomain. May display a viroporin activity. Binds to host cell surface receptor and mediates fusion between viral and cellular membranes. Envelope protein is synthesized in the endoplasmic reticulum in the form of heterodimer with protein prM. They play a role in virion budding in the ER, and the newly formed immature particle is covered with 60 spikes composed of heterodimer between precursor prM and envelope protein E. The virion is transported to the Golgi apparatus where the low pH causes dissociation of PrM-E heterodimers and formation of E homodimers. prM-E cleavage is inefficient, and many virions are only partially matured. These uncleaved prM would play a role in immune evasion. In terms of biological role, involved in immune evasion, pathogenesis and viral replication. Once cleaved off the polyprotein, is targeted to three destinations: the viral replication cycle, the plasma membrane and the extracellular compartment. Essential for viral replication. Required for formation of the replication complex and recruitment of other non-structural proteins to the ER-derived membrane structures. Excreted as a hexameric lipoparticle that plays a role against host immune response. Antagonizing the complement function. Binds to the host macrophages and dendritic cells. Inhibits signal transduction originating from Toll-like receptor 3 (TLR3). Mediates complement activation, which may contribute to the pathogenesis of the vascular leakage that occurs in severe dengue disease. Activates autophagy through the AMPK/ERK/mTOR signaling pathway. Mechanistically, acts as the assembly platform for STK11-AMPK interactions and promotes STK11-AMPK interactions. In turn, promotes phosphorylation of the AMPK kinase structural domain and activates AMPK, thereby positively regulating the AMPK/ERK/mTOR signaling pathway and inducing autophagy. Functionally, disrupts the host endothelial glycocalyx layer of host pulmonary microvascular endothelial cells, inducing degradation of sialic acid and shedding of heparan sulfate proteoglycans. NS1 induces expression of sialidases, heparanase, and activates cathepsin L, which activates heparanase via enzymatic cleavage. These effects are probably linked to the endothelial hyperpermeability observed in severe dengue disease. Its function is as follows. Component of the viral RNA replication complex that functions in virion assembly and antagonizes the host immune response. Required cofactor for the serine protease function of NS3. May have membrane-destabilizing activity and form viroporins. In terms of biological role, displays three enzymatic activities: serine protease, NTPase and RNA helicase. NS3 serine protease, in association with NS2B, performs its autocleavage and cleaves the polyprotein at dibasic sites in the cytoplasm: C-prM, NS2A-NS2B, NS2B-NS3, NS3-NS4A, NS4A-2K and NS4B-NS5. NS3 RNA helicase binds RNA and unwinds dsRNA in the 3' to 5' direction. Functionally, regulates the ATPase activity of the NS3 helicase activity. NS4A allows NS3 helicase to conserve energy during unwinding. Plays a role in the inhibition of the host innate immune response. Interacts with host MAVS and thereby prevents the interaction between RIGI and MAVS. In turn, IFN-beta production is impaired. Interacts with host AUP1 which mediates induction of lipophagy in host cells and facilitates production of virus progeny particles. Its function is as follows. Functions as a signal peptide for NS4B and is required for the interferon antagonism activity of the latter. Induces the formation of ER-derived membrane vesicles where the viral replication takes place. Inhibits interferon (IFN)-induced host STAT1 phosphorylation and nuclear translocation, thereby preventing the establishment of cellular antiviral state by blocking the IFN-alpha/beta pathway. In terms of biological role, replicates the viral (+) and (-) RNA genome, and performs the capping of genomes in the cytoplasm. NS5 methylates viral RNA cap at guanine N-7 and ribose 2'-O positions. Besides its role in RNA genome replication, also prevents the establishment of cellular antiviral state by blocking the interferon-alpha/beta (IFN-alpha/beta) signaling pathway. Inhibits host TYK2 and STAT2 phosphorylation, thereby preventing activation of JAK-STAT signaling pathway. May reduce immune responses by preventing the recruitment of the host PAF1 complex to interferon-responsive genes. The polypeptide is Genome polyprotein (Aedimorphus (Red guenon)).